A 213-amino-acid polypeptide reads, in one-letter code: ATP-dependent Clp protease proteolytic subunit 1 (213 aa).

S108 serves as the catalytic Nucleophile. The active site involves H133.

This sequence belongs to the peptidase S14 family. As to quaternary structure, fourteen ClpP subunits assemble into 2 heptameric rings which stack back to back to give a disk-like structure with a central cavity, resembling the structure of eukaryotic proteasomes.

It localises to the cytoplasm. It carries out the reaction Hydrolysis of proteins to small peptides in the presence of ATP and magnesium. alpha-casein is the usual test substrate. In the absence of ATP, only oligopeptides shorter than five residues are hydrolyzed (such as succinyl-Leu-Tyr-|-NHMec, and Leu-Tyr-Leu-|-Tyr-Trp, in which cleavage of the -Tyr-|-Leu- and -Tyr-|-Trp bonds also occurs).. Functionally, cleaves peptides in various proteins in a process that requires ATP hydrolysis. Has a chymotrypsin-like activity. Plays a major role in the degradation of misfolded proteins. The sequence is that of ATP-dependent Clp protease proteolytic subunit 1 from Frankia casuarinae (strain DSM 45818 / CECT 9043 / HFP020203 / CcI3).